A 429-amino-acid chain; its full sequence is Histidine--tRNA ligase (429 aa).

This sequence belongs to the class-II aminoacyl-tRNA synthetase family. In terms of assembly, homodimer.

It is found in the cytoplasm. The catalysed reaction is tRNA(His) + L-histidine + ATP = L-histidyl-tRNA(His) + AMP + diphosphate + H(+). The protein is Histidine--tRNA ligase of Pseudomonas syringae pv. tomato (strain ATCC BAA-871 / DC3000).